The sequence spans 613 residues: DNA polymerase II small subunit (613 aa).

Belongs to the DNA polymerase delta/II small subunit family. In terms of assembly, heterodimer of a large subunit and a small subunit.

The catalysed reaction is DNA(n) + a 2'-deoxyribonucleoside 5'-triphosphate = DNA(n+1) + diphosphate. It catalyses the reaction Exonucleolytic cleavage in the 3'- to 5'-direction to yield nucleoside 5'-phosphates.. Its function is as follows. Possesses two activities: a DNA synthesis (polymerase) and an exonucleolytic activity that degrades single-stranded DNA in the 3' to 5' direction. Has a template-primer preference which is characteristic of a replicative DNA polymerase. This chain is DNA polymerase II small subunit (polB), found in Pyrococcus furiosus (strain ATCC 43587 / DSM 3638 / JCM 8422 / Vc1).